The following is a 474-amino-acid chain: uncharacterized protein (474 aa).

10 helical membrane-spanning segments follow: residues 17-39, 44-61, 81-103, 144-166, 186-208, 239-256, 268-286, 319-341, 385-407, and 444-466; these read ILGGIIQIIGIFTLVPCIVSVYY, FLNFLIPGLFFSIFGFVL, LAWLIASFIGAIPLYLSIDYFSY, GVGILVLSALVLARSGTVAYLLY, IIWIYILYTILGVLLLYLSGLSF, IVMIGIMMVGGVMSFSIH, IQTKYALIVTAFISIIISI, LSLFLIIFLMLIGGGAGTTTGGV, AFVVFFLYCLSSFLTALIFIALG, and IIAMWIGRLEIIPVLVLFATLYF.

The protein belongs to the TrkH potassium transport family.

Its subcellular location is the cell membrane. This is an uncharacterized protein from Methanocaldococcus jannaschii (strain ATCC 43067 / DSM 2661 / JAL-1 / JCM 10045 / NBRC 100440) (Methanococcus jannaschii).